The primary structure comprises 128 residues: Fluoride-specific ion channel FluC 2 (128 aa).

Transmembrane regions (helical) follow at residues Ala13 to Gly35, Leu40 to Ala59, Leu71 to Leu93, and Trp97 to Ile119.

It belongs to the fluoride channel Fluc/FEX (TC 1.A.43) family.

It localises to the cell membrane. The enzyme catalyses fluoride(in) = fluoride(out). Functionally, fluoride-specific ion channel. Important for reducing fluoride concentration in the cell, thus reducing its toxicity. The protein is Fluoride-specific ion channel FluC 2 of Halobacterium salinarum (strain ATCC 700922 / JCM 11081 / NRC-1) (Halobacterium halobium).